The following is a 70-amino-acid chain: Small ribosomal subunit protein bS21A (70 aa).

The protein belongs to the bacterial ribosomal protein bS21 family.

The chain is Small ribosomal subunit protein bS21A (rpsU1) from Burkholderia mallei (strain ATCC 23344).